The following is a 210-amino-acid chain: Thymidylate kinase (210 aa).

Residue glycine 11–serine 18 coordinates ATP.

It belongs to the thymidylate kinase family.

It carries out the reaction dTMP + ATP = dTDP + ADP. Functionally, phosphorylation of dTMP to form dTDP in both de novo and salvage pathways of dTTP synthesis. The polypeptide is Thymidylate kinase (Mycoplasmoides gallisepticum (strain R(low / passage 15 / clone 2)) (Mycoplasma gallisepticum)).